The sequence spans 165 residues: 2-C-methyl-D-erythritol 2,4-cyclodiphosphate synthase (165 aa).

Residues aspartate 8 and histidine 10 each coordinate a divalent metal cation. Residues aspartate 8–histidine 10 and histidine 34–serine 35 contribute to the 4-CDP-2-C-methyl-D-erythritol 2-phosphate site. Residue histidine 42 participates in a divalent metal cation binding. 4-CDP-2-C-methyl-D-erythritol 2-phosphate is bound by residues aspartate 56–glycine 58, phenylalanine 61–aspartate 65, threonine 132–glutamate 135, phenylalanine 139, and arginine 142.

It belongs to the IspF family. In terms of assembly, homotrimer. It depends on a divalent metal cation as a cofactor.

It carries out the reaction 4-CDP-2-C-methyl-D-erythritol 2-phosphate = 2-C-methyl-D-erythritol 2,4-cyclic diphosphate + CMP. It functions in the pathway isoprenoid biosynthesis; isopentenyl diphosphate biosynthesis via DXP pathway; isopentenyl diphosphate from 1-deoxy-D-xylulose 5-phosphate: step 4/6. In terms of biological role, involved in the biosynthesis of isopentenyl diphosphate (IPP) and dimethylallyl diphosphate (DMAPP), two major building blocks of isoprenoid compounds. Catalyzes the conversion of 4-diphosphocytidyl-2-C-methyl-D-erythritol 2-phosphate (CDP-ME2P) to 2-C-methyl-D-erythritol 2,4-cyclodiphosphate (ME-CPP) with a corresponding release of cytidine 5-monophosphate (CMP). This Halothermothrix orenii (strain H 168 / OCM 544 / DSM 9562) protein is 2-C-methyl-D-erythritol 2,4-cyclodiphosphate synthase.